Reading from the N-terminus, the 149-residue chain is Large ribosomal subunit protein bL9 (149 aa).

It belongs to the bacterial ribosomal protein bL9 family. Part of the 50S ribosomal subunit. In stalled/collided disomes (pairs of ribosomes where the leading ribosome is stalled and a second ribosome has collided with it), bL9 in the collided ribosome contacts bS6 and uL2, while it contacts only helices of the 16S rRNA in the stalled ribosome; the inter-ribosome bridge thus formed is different from that formed between normally translating ribosomes.

Functionally, binds to the 23S rRNA. The sequence is that of Large ribosomal subunit protein bL9 from Bacillus subtilis (strain 168).